Consider the following 71-residue polypeptide: Large ribosomal subunit protein uL30 (71 aa).

The protein belongs to the universal ribosomal protein uL30 family. In terms of assembly, part of the 50S ribosomal subunit.

In Mycobacterium leprae (strain TN), this protein is Large ribosomal subunit protein uL30.